The primary structure comprises 305 residues: C alpha-dehydrogenase (305 aa).

Position 10–34 (10–34 (FITGGASGAGFGQAKVFGQAGAKIV)) interacts with NAD(+). Residue S144 coordinates substrate. The active-site Proton acceptor is the Y157.

Belongs to the short-chain dehydrogenases/reductases (SDR) family.

It participates in secondary metabolite metabolism; lignin degradation. Its function is as follows. Catalyzes the C alpha dehydrogenation of arylglycerol-beta-aryl ether (C alpha alcohol type) (compound IV). This is C alpha-dehydrogenase (ligD) from Sphingobium sp. (strain NBRC 103272 / SYK-6).